Reading from the N-terminus, the 249-residue chain is Indole-3-glycerol phosphate synthase (249 aa).

This sequence belongs to the TrpC family.

It carries out the reaction 1-(2-carboxyphenylamino)-1-deoxy-D-ribulose 5-phosphate + H(+) = (1S,2R)-1-C-(indol-3-yl)glycerol 3-phosphate + CO2 + H2O. It functions in the pathway amino-acid biosynthesis; L-tryptophan biosynthesis; L-tryptophan from chorismate: step 4/5. The polypeptide is Indole-3-glycerol phosphate synthase (Pyrobaculum neutrophilum (strain DSM 2338 / JCM 9278 / NBRC 100436 / V24Sta) (Thermoproteus neutrophilus)).